Consider the following 370-residue polypeptide: Protein DUF642 L-GALACTONO-1,4-LACTONE-RESPONSIVE GENE 1 (370 aa).

Residues 1–22 (MMYQEAALLLALLFISSNVVLS) form the signal peptide. Residue N124 is glycosylated (N-linked (GlcNAc...) asparagine).

As to expression, expressed at low levels in roots, seedlings and leaves.

It localises to the secreted. It is found in the cell wall. The protein is Protein DUF642 L-GALACTONO-1,4-LACTONE-RESPONSIVE GENE 1 of Arabidopsis thaliana (Mouse-ear cress).